The primary structure comprises 753 residues: Inactive protein-tyrosine phosphatase egg-4 (753 aa).

Disordered stretches follow at residues 26 to 46 and 75 to 145; these read TSLQSFCSGNTDDSSADSTDN and SFRK…SGHG. A compositionally biased stretch (low complexity) spans 35–46; that stretch reads NTDDSSADSTDN. 2 stretches are compositionally biased toward basic and acidic residues: residues 84–94 and 129–145; these read AQKDRRSKERL and VSEKPKDEGRREDSGHG. A Tyrosine-protein phosphatase domain is found at 408–661; sequence MERRFEILEN…IFVHRLVAFF (254 aa).

This sequence belongs to the protein-tyrosine phosphatase family. In terms of assembly, part of a complex, consisting of pseudophosphatases egg-3, egg-4, egg-5 and kinase mbk-2; this complex is required for the oocyte-to-zygote transition. Interacts (via tyrosine-protein phosphatase domain) with kinase mbk-2 (via 'Tyr-619' and 'Tyr-621'); mbk-2 tyrosine phosphorylation enhances the interaction. The interaction inhibits mbk-2 kinase activity and is required for mbk-2 oocyte cortex localization. Interacts with egg-3.

It is found in the cytoplasm. The protein localises to the cell cortex. Its function is as follows. Inactive phosphatase which acts redundantly with egg-5 in the oocyte-to-zygote transition. Required for the polarization of cortical actin cytoskeleton rearrangement in the oocyte before and after fertilization. Together with egg-5, required for the cortical localization of kinase mbk-2 and for the inhibition of mbk-2 kinase activity in maturing oocyte until the end of meiosis I. Also required for kinase mbk-2, pseudophosphatase egg-3 and chitin synthase chs-1 localization to cytoplasmic foci after fertilization. In Caenorhabditis elegans, this protein is Inactive protein-tyrosine phosphatase egg-4.